The sequence spans 1035 residues: Ephrin type-A receptor 6 (1035 aa).

An N-terminal signal peptide occupies residues 1-22 (MGGCEVREFLLQFGFFLPLLTA). The Extracellular segment spans residues 23–549 (WTGDCSHVSN…MAAEQGQILV (527 aa)). Positions 33–211 (QVVLLDTSTV…FYKKCPFTVR (179 aa)) constitute an Eph LBD domain. 2 Fibronectin type-III domains span residues 330–440 (PPSA…TDQD) and 441–536 (APSL…TGDE). Residues asparagine 342, asparagine 396, and asparagine 409 are each glycosylated (N-linked (GlcNAc...) asparagine). Residues 550–570 (IATAAVGGFTLLVILTLFFLI) form a helical membrane-spanning segment. The Cytoplasmic segment spans residues 571–1035 (TGRCQWYIKA…MHIQEKGFHV (465 aa)). Phosphotyrosine; by autocatalysis is present on residues tyrosine 605 and tyrosine 611. Positions 630 to 943 (IRIERVIGAG…RNPSALHTLV (314 aa)) constitute a Protein kinase domain. Residues 636–644 (IGAGEFGEV) and lysine 662 each bind ATP. Aspartate 797 (proton acceptor) is an active-site residue. Residues tyrosine 830 and tyrosine 977 each carry the phosphotyrosine; by autocatalysis modification. The region spanning 960 to 1024 (PLFVTVGDWL…VSSIQTLRLH (65 aa)) is the SAM domain. The PDZ-binding motif lies at 1033–1035 (FHV).

It belongs to the protein kinase superfamily. Tyr protein kinase family. Ephrin receptor subfamily. Heterotetramer upon binding of the ligand. The heterotetramer is composed of an ephrin dimer and a receptor dimer. Oligomerization is probably required to induce biological responses. Interacts (via SAM domain) with ANKS1A (via SAM domain). In terms of tissue distribution, brain.

It is found in the membrane. The enzyme catalyses L-tyrosyl-[protein] + ATP = O-phospho-L-tyrosyl-[protein] + ADP + H(+). In terms of biological role, receptor tyrosine kinase which binds promiscuously GPI-anchored ephrin-A family ligands residing on adjacent cells, leading to contact-dependent bidirectional signaling into neighboring cells. The signaling pathway downstream of the receptor is referred to as forward signaling while the signaling pathway downstream of the ephrin ligand is referred to as reverse signaling. This Rattus norvegicus (Rat) protein is Ephrin type-A receptor 6 (Epha6).